Consider the following 310-residue polypeptide: Putative S-adenosyl-L-methionine-dependent methyltransferase MUL_4762 (310 aa).

Residues Asp132 and 161-162 (DL) contribute to the S-adenosyl-L-methionine site.

The protein belongs to the UPF0677 family.

Its function is as follows. Exhibits S-adenosyl-L-methionine-dependent methyltransferase activity. The polypeptide is Putative S-adenosyl-L-methionine-dependent methyltransferase MUL_4762 (Mycobacterium ulcerans (strain Agy99)).